The following is a 371-amino-acid chain: Cytochrome b (371 aa).

Transmembrane regions (helical) follow at residues 25-45, 69-90, 105-125, and 170-190; these read FGSM…FLAV, WLMQ…YIHI, WMSG…GYVL, and FFAL…LHII. Heme b contacts are provided by H75 and H89. The heme b site is built by H174 and H188. H193 contacts a ubiquinone. A run of 4 helical transmembrane segments spans residues 218–238, 280–300, 312–332, and 339–358; these read YKDL…VSFF, LGGA…PLTH, LSQL…WAAT, and YIII…ISTP.

The protein belongs to the cytochrome b family. As to quaternary structure, the cytochrome bc1 complex contains 3 respiratory subunits (MT-CYB, CYC1 and UQCRFS1), 2 core proteins (UQCRC1 and UQCRC2) and probably 6 low-molecular weight proteins. Requires heme b as cofactor.

The protein resides in the mitochondrion inner membrane. Functionally, component of the ubiquinol-cytochrome c reductase complex (complex III or cytochrome b-c1 complex) that is part of the mitochondrial respiratory chain. The b-c1 complex mediates electron transfer from ubiquinol to cytochrome c. Contributes to the generation of a proton gradient across the mitochondrial membrane that is then used for ATP synthesis. This is Cytochrome b (MT-CYB) from Python regius (Ball python).